Reading from the N-terminus, the 485-residue chain is Aspartyl/glutamyl-tRNA(Asn/Gln) amidotransferase subunit B (485 aa).

Belongs to the GatB/GatE family. GatB subfamily. Heterotrimer of A, B and C subunits.

The enzyme catalyses L-glutamyl-tRNA(Gln) + L-glutamine + ATP + H2O = L-glutaminyl-tRNA(Gln) + L-glutamate + ADP + phosphate + H(+). It carries out the reaction L-aspartyl-tRNA(Asn) + L-glutamine + ATP + H2O = L-asparaginyl-tRNA(Asn) + L-glutamate + ADP + phosphate + 2 H(+). In terms of biological role, allows the formation of correctly charged Asn-tRNA(Asn) or Gln-tRNA(Gln) through the transamidation of misacylated Asp-tRNA(Asn) or Glu-tRNA(Gln) in organisms which lack either or both of asparaginyl-tRNA or glutaminyl-tRNA synthetases. The reaction takes place in the presence of glutamine and ATP through an activated phospho-Asp-tRNA(Asn) or phospho-Glu-tRNA(Gln). The polypeptide is Aspartyl/glutamyl-tRNA(Asn/Gln) amidotransferase subunit B (Paramagnetospirillum magneticum (strain ATCC 700264 / AMB-1) (Magnetospirillum magneticum)).